Reading from the N-terminus, the 559-residue chain is Formate--tetrahydrofolate ligase (559 aa).

Position 68–75 (68–75 (TPAGEGKT)) interacts with ATP.

Belongs to the formate--tetrahydrofolate ligase family.

The catalysed reaction is (6S)-5,6,7,8-tetrahydrofolate + formate + ATP = (6R)-10-formyltetrahydrofolate + ADP + phosphate. Its pathway is one-carbon metabolism; tetrahydrofolate interconversion. The chain is Formate--tetrahydrofolate ligase from Rhizobium rhizogenes (strain K84 / ATCC BAA-868) (Agrobacterium radiobacter).